The primary structure comprises 66 residues: Cytochrome b-c1 complex subunit 9, mitochondrial (66 aa).

The Mitochondrial matrix portion of the chain corresponds to 2–17 (SFSSLYKTFFKRNAVF). A helical transmembrane segment spans residues 18 to 43 (VGTIFAGAFVFQTVFDTAITSWYENH). The Mitochondrial intermembrane segment spans residues 44 to 66 (NKGKLWKDVKARIAAGDGDDDDE).

It belongs to the UQCR10/QCR9 family. Component of the ubiquinol-cytochrome c oxidoreductase (cytochrome b-c1 complex, complex III, CIII), a multisubunit enzyme composed of 10 subunits. The complex is composed of 3 respiratory subunits cytochrome b (COB), cytochrome c1 (CYT1) and Rieske protein (RIP1), 2 core protein subunits COR1 and QCR2, and 5 low-molecular weight protein subunits QCR6, QCR7, QCR8, QCR9 and QCR10. The complex exists as an obligatory dimer and forms supercomplexes (SCs) in the inner mitochondrial membrane with a monomer or a dimer of cytochrome c oxidase (complex IV, CIV), resulting in 2 different assemblies (supercomplexes III(2)IV and III(2)IV(2)). Interacts with the transmembrane segment of RIP1.

Its subcellular location is the mitochondrion inner membrane. In terms of biological role, component of the ubiquinol-cytochrome c oxidoreductase, a multisubunit transmembrane complex that is part of the mitochondrial electron transport chain which drives oxidative phosphorylation. The respiratory chain contains 3 multisubunit complexes succinate dehydrogenase (complex II, CII), ubiquinol-cytochrome c oxidoreductase (cytochrome b-c1 complex, complex III, CIII) and cytochrome c oxidase (complex IV, CIV), that cooperate to transfer electrons derived from NADH and succinate to molecular oxygen, creating an electrochemical gradient over the inner membrane that drives transmembrane transport and the ATP synthase. The cytochrome b-c1 complex catalyzes electron transfer from ubiquinol to cytochrome c, linking this redox reaction to translocation of protons across the mitochondrial inner membrane, with protons being carried across the membrane as hydrogens on the quinol. In the process called Q cycle, 2 protons are consumed from the matrix, 4 protons are released into the intermembrane space and 2 electrons are passed to cytochrome c. The chain is Cytochrome b-c1 complex subunit 9, mitochondrial (QCR9) from Saccharomyces cerevisiae (strain ATCC 204508 / S288c) (Baker's yeast).